The chain runs to 78 residues: Large ribosomal subunit protein bL28 (78 aa).

The interval 1-21 is disordered; it reads MSRVCQVTGKKPMVGNNRSHA.

The protein belongs to the bacterial ribosomal protein bL28 family.

The sequence is that of Large ribosomal subunit protein bL28 from Shewanella woodyi (strain ATCC 51908 / MS32).